The primary structure comprises 20 residues: N-acetyl-D-galactosamine-binding lectin subunit B (20 aa).

In terms of assembly, disulfide-linked heterodimer of A and B chains.

Its function is as follows. Gal / GalNAc-specific lectin. Agglutinates both native and trypsin-treated rabbit erythrocytes but not human erythrocytes irrespective of blood group type. This chain is N-acetyl-D-galactosamine-binding lectin subunit B, found in Iris hollandica (Dutch iris).